The chain runs to 179 residues: Large ribosomal subunit protein uL5 (179 aa).

Belongs to the universal ribosomal protein uL5 family. In terms of assembly, part of the 50S ribosomal subunit; part of the 5S rRNA/L5/L18/L25 subcomplex. Contacts the 5S rRNA and the P site tRNA. Forms a bridge to the 30S subunit in the 70S ribosome.

In terms of biological role, this is one of the proteins that bind and probably mediate the attachment of the 5S RNA into the large ribosomal subunit, where it forms part of the central protuberance. In the 70S ribosome it contacts protein S13 of the 30S subunit (bridge B1b), connecting the 2 subunits; this bridge is implicated in subunit movement. Contacts the P site tRNA; the 5S rRNA and some of its associated proteins might help stabilize positioning of ribosome-bound tRNAs. In Histophilus somni (strain 129Pt) (Haemophilus somnus), this protein is Large ribosomal subunit protein uL5.